A 302-amino-acid polypeptide reads, in one-letter code: Putative S-adenosyl-L-methionine-dependent methyltransferase MAV_2803 (302 aa).

S-adenosyl-L-methionine-binding positions include Asp-129 and 158 to 159 (DL).

This sequence belongs to the UPF0677 family.

In terms of biological role, exhibits S-adenosyl-L-methionine-dependent methyltransferase activity. The sequence is that of Putative S-adenosyl-L-methionine-dependent methyltransferase MAV_2803 from Mycobacterium avium (strain 104).